Consider the following 473-residue polypeptide: L-seryl-tRNA(Sec) selenium transferase (473 aa).

Residue K302 is modified to N6-(pyridoxal phosphate)lysine.

It belongs to the SelA family. The cofactor is pyridoxal 5'-phosphate.

The protein resides in the cytoplasm. It carries out the reaction L-seryl-tRNA(Sec) + selenophosphate + H(+) = L-selenocysteinyl-tRNA(Sec) + phosphate. It functions in the pathway aminoacyl-tRNA biosynthesis; selenocysteinyl-tRNA(Sec) biosynthesis; selenocysteinyl-tRNA(Sec) from L-seryl-tRNA(Sec) (bacterial route): step 1/1. In terms of biological role, converts seryl-tRNA(Sec) to selenocysteinyl-tRNA(Sec) required for selenoprotein biosynthesis. The chain is L-seryl-tRNA(Sec) selenium transferase from Shewanella oneidensis (strain ATCC 700550 / JCM 31522 / CIP 106686 / LMG 19005 / NCIMB 14063 / MR-1).